The primary structure comprises 659 residues: DNA mismatch repair protein MutL (659 aa).

This sequence belongs to the DNA mismatch repair MutL/HexB family.

In terms of biological role, this protein is involved in the repair of mismatches in DNA. It is required for dam-dependent methyl-directed DNA mismatch repair. May act as a 'molecular matchmaker', a protein that promotes the formation of a stable complex between two or more DNA-binding proteins in an ATP-dependent manner without itself being part of a final effector complex. The polypeptide is DNA mismatch repair protein MutL (Ligilactobacillus salivarius (strain UCC118) (Lactobacillus salivarius)).